We begin with the raw amino-acid sequence, 230 residues long: 2-C-methyl-D-erythritol 4-phosphate cytidylyltransferase (230 aa).

It belongs to the IspD/TarI cytidylyltransferase family. IspD subfamily.

The catalysed reaction is 2-C-methyl-D-erythritol 4-phosphate + CTP + H(+) = 4-CDP-2-C-methyl-D-erythritol + diphosphate. Its pathway is isoprenoid biosynthesis; isopentenyl diphosphate biosynthesis via DXP pathway; isopentenyl diphosphate from 1-deoxy-D-xylulose 5-phosphate: step 2/6. Its function is as follows. Catalyzes the formation of 4-diphosphocytidyl-2-C-methyl-D-erythritol from CTP and 2-C-methyl-D-erythritol 4-phosphate (MEP). In Nocardia farcinica (strain IFM 10152), this protein is 2-C-methyl-D-erythritol 4-phosphate cytidylyltransferase.